Here is a 139-residue protein sequence, read N- to C-terminus: Exodeoxyribonuclease 7 small subunit (139 aa).

Disordered stretches follow at residues 1-26 (MAKK…LGDF) and 82-139 (DAEG…EDDE). A compositionally biased stretch (acidic residues) spans 130–139 (ADLDSAEDDE).

The protein belongs to the XseB family. Heterooligomer composed of large and small subunits.

The protein resides in the cytoplasm. It catalyses the reaction Exonucleolytic cleavage in either 5'- to 3'- or 3'- to 5'-direction to yield nucleoside 5'-phosphates.. Its function is as follows. Bidirectionally degrades single-stranded DNA into large acid-insoluble oligonucleotides, which are then degraded further into small acid-soluble oligonucleotides. The protein is Exodeoxyribonuclease 7 small subunit of Rhodopirellula baltica (strain DSM 10527 / NCIMB 13988 / SH1).